A 616-amino-acid polypeptide reads, in one-letter code: Chaperone protein DnaK (616 aa).

At Thr174 the chain carries Phosphothreonine; by autocatalysis. The segment at 576-616 (QASAPGAGPEGASGGFGGENKKDDNVVDADYTVIDDDKKKT) is disordered. Residues 583 to 593 (GPEGASGGFGG) are compositionally biased toward gly residues.

The protein belongs to the heat shock protein 70 family.

Functionally, acts as a chaperone. The polypeptide is Chaperone protein DnaK (Heliobacterium modesticaldum (strain ATCC 51547 / Ice1)).